A 194-amino-acid chain; its full sequence is Peptidyl-tRNA hydrolase (194 aa).

A tRNA-binding site is contributed by Tyr17. His22 serves as the catalytic Proton acceptor. Residues Phe68, Asn70, and Asn116 each coordinate tRNA.

It belongs to the PTH family. In terms of assembly, monomer.

It is found in the cytoplasm. It carries out the reaction an N-acyl-L-alpha-aminoacyl-tRNA + H2O = an N-acyl-L-amino acid + a tRNA + H(+). In terms of biological role, hydrolyzes ribosome-free peptidyl-tRNAs (with 1 or more amino acids incorporated), which drop off the ribosome during protein synthesis, or as a result of ribosome stalling. Catalyzes the release of premature peptidyl moieties from peptidyl-tRNA molecules trapped in stalled 50S ribosomal subunits, and thus maintains levels of free tRNAs and 50S ribosomes. This Haemophilus influenzae (strain PittGG) protein is Peptidyl-tRNA hydrolase.